A 122-amino-acid polypeptide reads, in one-letter code: MTSLHSLAGLLLLMIIQSSWQMPDQDPDRNSMLLNENSMLTEPIEPLNMKRHSEGTFSNDYSKYLETRRAQDFVQWLKNSKRNGLFRRHADGTYTSDVSSYLQDQAAKDFVSWLKAGRGRRE.

The first 21 residues, 1–21, serve as a signal peptide directing secretion; it reads MTSLHSLAGLLLLMIIQSSWQ. Propeptides lie at residues 83–86 and glutamate 122; that span reads NGLF.

It belongs to the glucagon family.

The protein localises to the secreted. Functionally, promotes hydrolysis of glycogen and lipids, and raises the blood sugar level. The polypeptide is Glucagon-2 (gcg2) (Lophius americanus (American angler)).